Consider the following 77-residue polypeptide: Acyl carrier protein (77 aa).

Positions 1–76 (MENFDKVKDI…DAVKFINSLE (76 aa)) constitute a Carrier domain. Serine 36 carries the post-translational modification O-(pantetheine 4'-phosphoryl)serine.

Belongs to the acyl carrier protein (ACP) family. 4'-phosphopantetheine is transferred from CoA to a specific serine of apo-ACP by AcpS. This modification is essential for activity because fatty acids are bound in thioester linkage to the sulfhydryl of the prosthetic group.

It is found in the cytoplasm. It functions in the pathway lipid metabolism; fatty acid biosynthesis. Functionally, carrier of the growing fatty acid chain in fatty acid biosynthesis. The protein is Acyl carrier protein of Staphylococcus aureus (strain Mu3 / ATCC 700698).